Reading from the N-terminus, the 81-residue chain is Keratin-associated protein 19-3 (81 aa).

Belongs to the KRTAP type 19 family. Interacts with hair keratins.

Its function is as follows. In the hair cortex, hair keratin intermediate filaments are embedded in an interfilamentous matrix, consisting of hair keratin-associated proteins (KRTAP), which are essential for the formation of a rigid and resistant hair shaft through their extensive disulfide bond cross-linking with abundant cysteine residues of hair keratins. The matrix proteins include the high-sulfur and high-glycine-tyrosine keratins. This chain is Keratin-associated protein 19-3 (KRTAP19-3), found in Homo sapiens (Human).